Here is an 818-residue protein sequence, read N- to C-terminus: Dipeptidyl-peptidase 7 (818 aa).

The N-terminal stretch at 1 to 22 is a signal peptide; sequence MKLKRILLSVALLCGIGTTAMA. Active-site charge relay system residues include His-87, Asp-223, and Ser-645.

This sequence belongs to the peptidase S46 family.

Functionally, catalyzes the removal of dipeptides from the N-terminus of oligopeptides. Most efficiently cleaves the synthetic substrate Met-Leu-methylcoumaryl-7-amide (Met-Leu-MCA), and slowly hydrolyzes Leu-Gln-, Lys-Ala-, Leu-Arg, and Ala-Asn-MCA. Is likely involved in amino acid metabolism and bacterial growth/survival of asaccharolytic P.endodontalis, that utilizes amino acids from extracellular proteinaceous nutrients as energy and carbon sources. This chain is Dipeptidyl-peptidase 7, found in Porphyromonas endodontalis (strain ATCC 35406 / DSM 24491 / JCM 8526 / CCUG 16442 / BCRC 14492 / NCTC 13058 / HG 370) (Bacteroides endodontalis).